Here is a 331-residue protein sequence, read N- to C-terminus: Phospho-N-acetylmuramoyl-pentapeptide-transferase (331 aa).

A run of 9 helical transmembrane segments spans residues 7 to 27, 54 to 74, 78 to 98, 106 to 126, 133 to 153, 154 to 174, 195 to 215, 249 to 269, and 311 to 331; these read IIYTIIIGFIITLILGPLTIP, TIGGIILIMSIIITSLTSGLI, LWIALAATVAFGIIGFIDDFI, LGLRAYQKLILQGTIAVILAI, IMGTEVIVPFVGEGITIAGFT, ITQTIDLGILYIPFIVFVVVA, IIAAFFALVAMSWGYVSLAIF, AIATIAVLMNVVLIIPIVGGI, and VVIVFWVVTVILCLVGMLALS.

The protein belongs to the glycosyltransferase 4 family. MraY subfamily. Mg(2+) serves as cofactor.

The protein resides in the cell membrane. It catalyses the reaction UDP-N-acetyl-alpha-D-muramoyl-L-alanyl-gamma-D-glutamyl-meso-2,6-diaminopimeloyl-D-alanyl-D-alanine + di-trans,octa-cis-undecaprenyl phosphate = di-trans,octa-cis-undecaprenyl diphospho-N-acetyl-alpha-D-muramoyl-L-alanyl-D-glutamyl-meso-2,6-diaminopimeloyl-D-alanyl-D-alanine + UMP. Its pathway is cell wall biogenesis; peptidoglycan biosynthesis. In terms of biological role, catalyzes the initial step of the lipid cycle reactions in the biosynthesis of the cell wall peptidoglycan: transfers peptidoglycan precursor phospho-MurNAc-pentapeptide from UDP-MurNAc-pentapeptide onto the lipid carrier undecaprenyl phosphate, yielding undecaprenyl-pyrophosphoryl-MurNAc-pentapeptide, known as lipid I. The chain is Phospho-N-acetylmuramoyl-pentapeptide-transferase from Alkaliphilus metalliredigens (strain QYMF).